We begin with the raw amino-acid sequence, 215 residues long: Phosphatidylserine decarboxylase proenzyme (215 aa).

The Schiff-base intermediate with substrate; via pyruvic acid role is filled by Ser-184. Ser-184 is subject to Pyruvic acid (Ser); by autocatalysis.

This sequence belongs to the phosphatidylserine decarboxylase family. PSD-A subfamily. Heterodimer of a large membrane-associated beta subunit and a small pyruvoyl-containing alpha subunit. The cofactor is pyruvate. Post-translationally, is synthesized initially as an inactive proenzyme. Formation of the active enzyme involves a self-maturation process in which the active site pyruvoyl group is generated from an internal serine residue via an autocatalytic post-translational modification. Two non-identical subunits are generated from the proenzyme in this reaction, and the pyruvate is formed at the N-terminus of the alpha chain, which is derived from the carboxyl end of the proenzyme. The post-translation cleavage follows an unusual pathway, termed non-hydrolytic serinolysis, in which the side chain hydroxyl group of the serine supplies its oxygen atom to form the C-terminus of the beta chain, while the remainder of the serine residue undergoes an oxidative deamination to produce ammonia and the pyruvoyl prosthetic group on the alpha chain.

The protein resides in the cell membrane. The catalysed reaction is a 1,2-diacyl-sn-glycero-3-phospho-L-serine + H(+) = a 1,2-diacyl-sn-glycero-3-phosphoethanolamine + CO2. It participates in phospholipid metabolism; phosphatidylethanolamine biosynthesis; phosphatidylethanolamine from CDP-diacylglycerol: step 2/2. Its function is as follows. Catalyzes the formation of phosphatidylethanolamine (PtdEtn) from phosphatidylserine (PtdSer). The chain is Phosphatidylserine decarboxylase proenzyme from Ralstonia nicotianae (strain ATCC BAA-1114 / GMI1000) (Ralstonia solanacearum).